We begin with the raw amino-acid sequence, 145 residues long: MRYLLLTFFTFHCQMVADALPRAKRLRLLREAKARKESGEGKIEEAGMIVTTGAPTPENETMEHNEVPQSTTDTDQKSEEIVEKIAQVQEEGANTEDESDEELLNLAPKRANWDMERDIAPMLRKLERRTQHAIVEILRTCDLKQ.

The N-terminal stretch at 1-19 (MRYLLLTFFTFHCQMVADA) is a signal peptide. Residues 27–30 (RLLR) carry the RxLR motif. Residues 38–77 (SGEGKIEEAGMIVTTGAPTPENETMEHNEVPQSTTDTDQK) are disordered. Asparagine 59 is a glycosylation site (N-linked (GlcNAc...) asparagine).

The protein belongs to the RxLR effector family.

The protein resides in the secreted. It localises to the host nucleus. Functionally, secreted effector that dos not suppress the host cell death induced by cell death-inducing proteins. The chain is Secreted RxLR effector protein 100 from Plasmopara viticola (Downy mildew of grapevine).